Reading from the N-terminus, the 672-residue chain is Probable urocanate hydratase (672 aa).

NAD(+)-binding positions include Gly-128–Gly-129, Gln-206, Gly-253–Ser-255, Glu-273, Asn-318–Val-319, Gln-340–His-344, Tyr-351–Tyr-352, Tyr-400, and Gly-592.

Belongs to the urocanase family. It depends on NAD(+) as a cofactor.

The catalysed reaction is 4-imidazolone-5-propanoate = trans-urocanate + H2O. It functions in the pathway amino-acid degradation; L-histidine degradation into L-glutamate; N-formimidoyl-L-glutamate from L-histidine: step 2/3. This Dictyostelium discoideum (Social amoeba) protein is Probable urocanate hydratase (uroc1).